The chain runs to 733 residues: MDEDDGLLLNFAVPDVSVSSGSNKRTTSKVTGGKWKDRRKLQLSLQGRGRNQKKDRSATGKDDGKKHENDESNDSKKRPTIEPIHGPTSKMIKFSESKGEFGGKNNSYVSSLFTSNQSSSQLKVTKESDEKTYLPSNAPVEDASTFEGLGINERLSKHLTETLRFKNPTKVQKSVIPTMLSTERDLFIKAQTGSGKTLSFLLPIFHKLMMENKHKINRDSGLFAVILTPTRELATQIYGVLETLTRCYHHIVPGIVIGGEKKKSEKARIRKGVNILVGTPGRLADHMENTESLDISQLRWLILDEGDKLVELGFEETITKITNLITRNSQIMESMHKWQGLPVRRINLLCSATMQNNVEKLGSIILNNPEMISDGSSSGKHSEEVTAPDQLIQNVVVVPPKLRLVTLSAILKKISSDMSGTNNSTRTIVFFSCSDSVNFHFDVFTRGGNTFKKVKNDESGKLETVEVENDTPLIGQGTAVYKLHGSLSQQTRTSTLQAFIKDSKSNHSILFCTDVASRGLDLPNIASVIEYDPPFTIDDHLHRIGRSARVGKEGTATLFLLPGNEEGYVDGKLQVVHPKEGNLRIVNYENYLKDGFSAKSNNEDTKKKSKDPKSREGKWDIHATTWHLDIERWLLEDSGAHDKAVQAFTSHIRAYATHLSSERNYFNVKLLHLGHLAKSFGLRETPKKLGKSVESNSGIQGASKKTKKEDPRKKMLRMAKMALKSNSDEFNYS.

Disordered regions lie at residues 1-92 (MDED…SKMI) and 119-139 (SSQLKVTKESDEKTYLPSNAP). Residues 17 to 30 (SVSSGSNKRTTSKV) show a composition bias toward polar residues. Basic and acidic residues predominate over residues 52–80 (QKKDRSATGKDDGKKHENDESNDSKKRPT). The Q motif motif lies at 144 to 173 (STFEGLGINERLSKHLTETLRFKNPTKVQK). The region spanning 177 to 372 (PTMLSTERDL…SIILNNPEMI (196 aa)) is the Helicase ATP-binding domain. 190 to 197 (AQTGSGKT) contacts ATP. The DEAD box motif lies at 304–307 (DEGD). A Helicase C-terminal domain is found at 406–596 (TLSAILKKIS…NYENYLKDGF (191 aa)). The interval 687–714 (KKLGKSVESNSGIQGASKKTKKEDPRKK) is disordered.

This sequence belongs to the DEAD box helicase family. DDX31/DBP7 subfamily.

The protein localises to the nucleus. It localises to the nucleolus. The enzyme catalyses ATP + H2O = ADP + phosphate + H(+). In terms of biological role, ATP-binding RNA helicase involved in the biogenesis of 60S ribosomal subunits and is required for the normal formation of 25S and 5.8S rRNAs. In Scheffersomyces stipitis (strain ATCC 58785 / CBS 6054 / NBRC 10063 / NRRL Y-11545) (Yeast), this protein is ATP-dependent RNA helicase DBP7 (DPB7).